Consider the following 983-residue polypeptide: Protein CLASP-3 (983 aa).

2 disordered regions span residues 356–393 (YPNR…TQKA) and 666–690 (SNNI…QKES). The span at 359-372 (RPGSRTRTSSITST) shows a compositional bias: low complexity. An HEAT repeat occupies 918–956 (ITPTIIKAYQSTSSTVRKTVVYCLVAMVNRVGEQRMTPH).

The protein belongs to the CLASP family.

Its subcellular location is the cytoplasm. The protein localises to the cytoskeleton. Functionally, microtubule plus-end tracking protein that promotes the stabilization of dynamic microtubules. This Caenorhabditis elegans protein is Protein CLASP-3 (cls-3).